Reading from the N-terminus, the 349-residue chain is Core protein VP7 (349 aa).

A glycan (N-linked (GlcNAc...) asparagine; by host) is linked at N287.

The protein belongs to the orbivirus VP7 family. Homotrimer that assemble in a complex of 260 capsomers on an inner scaffold composed of VP3.

It localises to the virion. Its function is as follows. The VP7 protein is one of the five proteins (with VP1, VP3, VP4, and VP6) which form the inner capsid of the virus. The sequence is that of Core protein VP7 (Segment-7) from Antilocapra americana (Pronghorn).